Here is a 306-residue protein sequence, read N- to C-terminus: tRNA pseudouridine synthase B (306 aa).

The active-site Nucleophile is the Asp-47.

The protein belongs to the pseudouridine synthase TruB family. Type 1 subfamily.

The catalysed reaction is uridine(55) in tRNA = pseudouridine(55) in tRNA. Functionally, responsible for synthesis of pseudouridine from uracil-55 in the psi GC loop of transfer RNAs. In Neisseria gonorrhoeae (strain NCCP11945), this protein is tRNA pseudouridine synthase B.